The sequence spans 252 residues: Vitamin B12 import ATP-binding protein BtuD (252 aa).

The ABC transporter domain maps to 2–237 (IQIKSLSVGA…EQLESVFNTQ (236 aa)). 30 to 37 (GPNGSGKS) lines the ATP pocket.

It belongs to the ABC transporter superfamily. Vitamin B12 importer (TC 3.A.1.13.1) family. As to quaternary structure, the complex is composed of two ATP-binding proteins (BtuD), two transmembrane proteins (BtuC) and a solute-binding protein (BtuF).

The protein localises to the cell inner membrane. The enzyme catalyses an R-cob(III)alamin(out) + ATP + H2O = an R-cob(III)alamin(in) + ADP + phosphate + H(+). Functionally, part of the ABC transporter complex BtuCDF involved in vitamin B12 import. Responsible for energy coupling to the transport system. This chain is Vitamin B12 import ATP-binding protein BtuD, found in Vibrio atlanticus (strain LGP32) (Vibrio splendidus (strain Mel32)).